A 143-amino-acid chain; its full sequence is Nucleoside diphosphate kinase (143 aa).

The ATP site is built by lysine 11, phenylalanine 59, arginine 87, threonine 93, arginine 104, and asparagine 114. The Pros-phosphohistidine intermediate role is filled by histidine 117.

This sequence belongs to the NDK family. In terms of assembly, homotetramer. It depends on Mg(2+) as a cofactor.

Its subcellular location is the cytoplasm. The enzyme catalyses a 2'-deoxyribonucleoside 5'-diphosphate + ATP = a 2'-deoxyribonucleoside 5'-triphosphate + ADP. It catalyses the reaction a ribonucleoside 5'-diphosphate + ATP = a ribonucleoside 5'-triphosphate + ADP. Major role in the synthesis of nucleoside triphosphates other than ATP. The ATP gamma phosphate is transferred to the NDP beta phosphate via a ping-pong mechanism, using a phosphorylated active-site intermediate. The chain is Nucleoside diphosphate kinase from Pseudoalteromonas translucida (strain TAC 125).